The chain runs to 139 residues: Actin-depolymerizing factor 1 (139 aa).

Residues 5–139 (ASGMAVCDEC…SMDIVKSRAL (135 aa)) enclose the ADF-H domain.

The protein belongs to the actin-binding proteins ADF family.

Actin-depolymerizing protein. Severs actin filaments (F-actin) and binds to actin monomers. The protein is Actin-depolymerizing factor 1 (ADF1) of Oryza sativa subsp. japonica (Rice).